Here is a 103-residue protein sequence, read N- to C-terminus: uncharacterized protein (103 aa).

The interval 69 to 103 (SSISYPGGGGGGGGSAKSLSSSKPGGGGGSPLIFL) is disordered. Gly residues-rich tracts occupy residues 74–83 (PGGGGGGGGS) and 92–103 (PGGGGGSPLIFL).

This is an uncharacterized protein from Saccharomyces cerevisiae (strain ATCC 204508 / S288c) (Baker's yeast).